The chain runs to 236 residues: Phycocyanobilin:ferredoxin oxidoreductase (236 aa).

This sequence belongs to the HY2 family.

The catalysed reaction is (2R,3Z)-phycocyanobilin + 4 oxidized [2Fe-2S]-[ferredoxin] = biliverdin IXalpha + 4 reduced [2Fe-2S]-[ferredoxin] + 4 H(+). Its function is as follows. Catalyzes the four-electron reduction of biliverdin IX-alpha (2-electron reduction at both the A and D rings); the reaction proceeds via an isolatable 2-electron intermediate, 181,182-dihydrobiliverdin. This is Phycocyanobilin:ferredoxin oxidoreductase (pcyA) from Thermosynechococcus vestitus (strain NIES-2133 / IAM M-273 / BP-1).